We begin with the raw amino-acid sequence, 155 residues long: Ciliary microtubule inner protein 2C (155 aa).

The protein belongs to the CIMIP2 family.

Its subcellular location is the cytoplasm. It localises to the cytoskeleton. It is found in the cilium axoneme. Its function is as follows. Microtubule inner protein (MIP) part of the dynein-decorated doublet microtubules (DMTs) in cilia axoneme, which is required for motile cilia beating. This chain is Ciliary microtubule inner protein 2C (cimip2c), found in Xenopus tropicalis (Western clawed frog).